Here is a 401-residue protein sequence, read N- to C-terminus: Probable plasmid-partitioning protein ParB (401 aa).

The tract at residues 232–272 is disordered; sequence KTRGKENARDKAAAVKEEVKPSKKPKADNGEKTPKGRSHEE.

The protein belongs to the ParB family.

This is Probable plasmid-partitioning protein ParB from Xylella fastidiosa (strain 9a5c).